The following is a 992-amino-acid chain: Disks large-associated protein 1 (992 aa).

2 disordered regions span residues 150–209 and 355–376; these read TKSH…SWWS and KAMGDEDSGDSDTSPKPSPKVA. S169 carries the post-translational modification Phosphoserine. A compositionally biased stretch (low complexity) spans 194–209; sequence RSNASNASPTSPSWWS. 13 positions are modified to phosphoserine: S362, S365, S368, S372, S389, S418, S421, S425, S428, S437, S509, S516, and S578. T579 bears the Phosphothreonine mark. A phosphoserine mark is found at S581 and S605. At T606 the chain carries Phosphothreonine. S608 and S611 each carry phosphoserine. Interaction with DYL2 regions lie at residues 665 to 676 and 687 to 698; these read LSIGIQVDDAEE and NKFQSVGVQVEE. Residues 914–980 form a disordered region; that stretch reads WKQMDPLDKK…QNSATESAES (67 aa). Composition is skewed to basic and acidic residues over residues 918–927 and 943–958; these read DPLDKKERRA and IRERSLESSQRQEARK. Residue S947 is modified to Phosphoserine. The segment covering 969 to 978 has biased composition (polar residues); sequence VRQNSATESA. The PDZ-binding motif lies at 990 to 992; it reads TRL.

The protein belongs to the SAPAP family. In terms of assembly, interacts with the guanylate kinase-like domain of DLG1, DLG2, DLG3, DLG4 and AIP1. Interacts with the PDZ domain of SHANK1, SHANK2 and SHANK3. Found in a complex with DLG4 and SHANK1, SHANK2 or SHANK3. Found in a complex with DLG4 and BEGAIN. Interacts with DYL2 and LRFN1. Interacts with MPP2 (via the SH3-Guanylate kinase-like sub-module). Post-translationally, ubiquitinated by TRIM3; leading to proteasomal degradation. As to expression, highest levels in the neocortex, part of the hippocampus, the granule cell layer of the cerebellum, the glomerular layer of the olfactory bulb, the inner plexiform layer of the retina, the ventral and dorsal horn of the spinal cord, the neuromuscular junction and the submandibular ganglion.

The protein localises to the cell membrane. It localises to the postsynaptic density. It is found in the synapse. Functionally, part of the postsynaptic scaffold in neuronal cells. This is Disks large-associated protein 1 (Dlgap1) from Mus musculus (Mouse).